Here is a 380-residue protein sequence, read N- to C-terminus: Zinc metalloproteinase-like protein nas-21 (380 aa).

Residues 1-24 (MNYFITFFFMHIAVLNFYFRFSNG) form the signal peptide. Residues 46-234 (QALRMDNEPR…LMINEYYQCS (189 aa)) form the Peptidase M12A domain. Residue Asn87 is glycosylated (N-linked (GlcNAc...) asparagine). Intrachain disulfides connect Cys90-Cys233 and Cys110-Cys130. The active site involves Glu138. N-linked (GlcNAc...) asparagine glycosylation is found at Asn253, Asn269, Asn283, and Asn304.

The protein localises to the secreted. In terms of biological role, may lack metalloprotease activity. The chain is Zinc metalloproteinase-like protein nas-21 (nas-21) from Caenorhabditis elegans.